The following is a 302-amino-acid chain: MDPLLLGSVGVLVLAVTLIIWRLLKLQWDEKAARQRTDMLLAMNEGAGGSDERRGANVAGGMRRNARRRVNRDEQEDGFVNHMMNDGEDVEDLDGGAEQFEYDEDGKKIGKRKAAKLQAKEEKRQMREYEVREREERKRREEEREKKRDEERAKEEADEKAEEERLRKEREEKERKEHEEYLAMKASFAIEEEGTDAIEGEEAENLIRDFVDYVKTNKVVNIDELSSHFGLKSEDAVNRLQHFIEEGLVQGVMDDRGKFIYISDEEFAAVAKFINQRGRVSIHEIAEQSNRLIRLETPSAAE.

A helical transmembrane segment spans residues methionine 1 to tryptophan 21. At arginine 22–glutamate 302 the chain is on the cytoplasmic side. The segment at glutamate 101–histidine 178 is disordered. Positions glutamine 118 to histidine 178 are enriched in basic and acidic residues.

Belongs to the DDRGK1 family.

Its subcellular location is the endoplasmic reticulum membrane. Functionally, substrate adapter for ufmylation, the covalent attachment of the ubiquitin-like modifier ufm-1 to substrate proteins. The polypeptide is DDRGK domain-containing protein 1 (Caenorhabditis elegans).